A 206-amino-acid chain; its full sequence is Ribosomal RNA large subunit methyltransferase E (206 aa).

5 residues coordinate S-adenosyl-L-methionine: Gly-60, Trp-62, Asp-80, Asp-96, and Asp-121. Catalysis depends on Lys-161, which acts as the Proton acceptor.

This sequence belongs to the class I-like SAM-binding methyltransferase superfamily. RNA methyltransferase RlmE family.

The protein resides in the cytoplasm. It catalyses the reaction uridine(2552) in 23S rRNA + S-adenosyl-L-methionine = 2'-O-methyluridine(2552) in 23S rRNA + S-adenosyl-L-homocysteine + H(+). Functionally, specifically methylates the uridine in position 2552 of 23S rRNA at the 2'-O position of the ribose in the fully assembled 50S ribosomal subunit. The protein is Ribosomal RNA large subunit methyltransferase E of Francisella tularensis subsp. novicida (strain U112).